A 286-amino-acid polypeptide reads, in one-letter code: uncharacterized protein (286 aa).

7 consecutive transmembrane segments (helical) span residues 30-50 (LTFMVAAFGIFFIFLVALTVQ), 68-88 (LSTIAVITSFVSLILYFVTAF), 99-119 (WFWALIITDVISYGITLGILL), 136-156 (IVYAFLGASLVFGSVWGLSAL), 169-189 (LFHILLWAFVISIVASLLSFI), 205-225 (IIPGLSLIVGGIFSLISVYFV), and 254-274 (SALFFGAWLISSFMNLVYFIL).

The protein resides in the cell membrane. This is an uncharacterized protein from Mycoplasma genitalium (strain ATCC 33530 / DSM 19775 / NCTC 10195 / G37) (Mycoplasmoides genitalium).